The sequence spans 163 residues: Transcription antitermination protein NusB (163 aa).

The disordered stretch occupies residues 1–21; sequence MTTFLSDSEHPQDVKAPPKSA.

Belongs to the NusB family.

Involved in transcription antitermination. Required for transcription of ribosomal RNA (rRNA) genes. Binds specifically to the boxA antiterminator sequence of the ribosomal RNA (rrn) operons. The sequence is that of Transcription antitermination protein NusB from Dechloromonas aromatica (strain RCB).